Reading from the N-terminus, the 384-residue chain is Chorismate synthase (384 aa).

Positions 39 and 45 each coordinate NADP(+). FMN contacts are provided by residues 130 to 132 (RSS), 248 to 249 (NA), glycine 292, 307 to 311 (KPIPT), and arginine 333.

The protein belongs to the chorismate synthase family. Homotetramer. It depends on FMNH2 as a cofactor.

The catalysed reaction is 5-O-(1-carboxyvinyl)-3-phosphoshikimate = chorismate + phosphate. It participates in metabolic intermediate biosynthesis; chorismate biosynthesis; chorismate from D-erythrose 4-phosphate and phosphoenolpyruvate: step 7/7. Catalyzes the anti-1,4-elimination of the C-3 phosphate and the C-6 proR hydrogen from 5-enolpyruvylshikimate-3-phosphate (EPSP) to yield chorismate, which is the branch point compound that serves as the starting substrate for the three terminal pathways of aromatic amino acid biosynthesis. This reaction introduces a second double bond into the aromatic ring system. The protein is Chorismate synthase of Exiguobacterium sibiricum (strain DSM 17290 / CCUG 55495 / CIP 109462 / JCM 13490 / 255-15).